The primary structure comprises 179 residues: Interleukin-22 (179 aa).

The signal sequence occupies residues 1-33 (MAALQKSVSSFLMGTLATSCLLLLALLVQGGAA). Intrachain disulfides connect Cys40–Cys132 and Cys89–Cys178. N-linked (GlcNAc...) asparagine glycans are attached at residues Asn54, Asn68, and Asn97.

This sequence belongs to the IL-10 family.

The protein localises to the secreted. Cytokine that plays a critical role in modulating tissue responses during inflammation. Plays an essential role in the regeneration of epithelial cells to maintain barrier function after injury and for the prevention of further tissue damage. Unlike most of the cytokines, has no effect on immune cells. Signals through a heterodimeric receptor composed of two subunits, the specific receptor IL22RA1 which is present on non-immune cells in many organs and the shared subunit IL10RB. Ligation of IL22RA1 with IL22 induces activation of the tyrosine kinases JAK1 and TYK2, which in turn activates STAT3. In turn, promotes cell survival and proliferation through STAT3, ERK1/2 and PI3K/AKT pathways. Promotes phosphorylation of GSK3B at 'Ser-9' and CTTN. Promotes epithelial cell spreading. This chain is Interleukin-22 (IL22), found in Homo sapiens (Human).